The primary structure comprises 360 residues: Pyrimidine monooxygenase RutA (360 aa).

Residues 49 to 50, N115, E124, 140 to 141, and S190 each bind FMN; these read IK and RY.

The protein belongs to the NtaA/SnaA/DszA monooxygenase family. RutA subfamily.

It carries out the reaction uracil + FMNH2 + NADH + O2 = (Z)-3-ureidoacrylate + FMN + NAD(+) + H2O + H(+). The enzyme catalyses thymine + FMNH2 + NADH + O2 = (Z)-2-methylureidoacrylate + FMN + NAD(+) + H2O + H(+). In terms of biological role, catalyzes the pyrimidine ring opening between N-3 and C-4 by an unusual flavin hydroperoxide-catalyzed mechanism, adding oxygen atoms in the process to yield ureidoacrylate peracid, that immediately reacts with FMN forming ureidoacrylate and FMN-N(5)-oxide. The FMN-N(5)-oxide reacts spontaneously with NADH to produce FMN. Requires the flavin reductase RutF to regenerate FMN in vivo. The protein is Pyrimidine monooxygenase RutA of Stutzerimonas stutzeri (strain A1501) (Pseudomonas stutzeri).